A 217-amino-acid chain; its full sequence is Protein GrpE (217 aa).

3 stretches are compositionally biased toward acidic residues: residues 1–28, 136–152, and 204–217; these read MSDDQGDAVEASSEADEEASTSPDEGDD, DILDGEGVEAIEPDPGT, and SEAEDDADGEDGDE. Disordered regions lie at residues 1 to 44, 135 to 157, and 193 to 217; these read MSDD…NDPA, DDILDGEGVEAIEPDPGTETDPK, and QVTVSEGPSGDSEAEDDADGEDGDE.

The protein belongs to the GrpE family. Homodimer.

The protein resides in the cytoplasm. Participates actively in the response to hyperosmotic and heat shock by preventing the aggregation of stress-denatured proteins, in association with DnaK and GrpE. It is the nucleotide exchange factor for DnaK and may function as a thermosensor. Unfolded proteins bind initially to DnaJ; upon interaction with the DnaJ-bound protein, DnaK hydrolyzes its bound ATP, resulting in the formation of a stable complex. GrpE releases ADP from DnaK; ATP binding to DnaK triggers the release of the substrate protein, thus completing the reaction cycle. Several rounds of ATP-dependent interactions between DnaJ, DnaK and GrpE are required for fully efficient folding. This Natronomonas pharaonis (strain ATCC 35678 / DSM 2160 / CIP 103997 / JCM 8858 / NBRC 14720 / NCIMB 2260 / Gabara) (Halobacterium pharaonis) protein is Protein GrpE.